The chain runs to 106 residues: Small ribosomal subunit protein uS10 (106 aa).

It belongs to the universal ribosomal protein uS10 family. As to quaternary structure, part of the 30S ribosomal subunit.

Involved in the binding of tRNA to the ribosomes. This chain is Small ribosomal subunit protein uS10, found in Parasynechococcus marenigrum (strain WH8102).